The primary structure comprises 75 residues: Putative membrane protein insertion efficiency factor (75 aa).

It belongs to the UPF0161 family.

The protein localises to the cell inner membrane. Functionally, could be involved in insertion of integral membrane proteins into the membrane. This is Putative membrane protein insertion efficiency factor from Gloeothece citriformis (strain PCC 7424) (Cyanothece sp. (strain PCC 7424)).